We begin with the raw amino-acid sequence, 134 residues long: D-ribose pyranase (134 aa).

His-20 (proton donor) is an active-site residue. Residues Asp-28, His-101, and 123 to 125 (YSN) each bind substrate.

The protein belongs to the RbsD / FucU family. RbsD subfamily. As to quaternary structure, homodecamer.

The protein resides in the cytoplasm. It carries out the reaction beta-D-ribopyranose = beta-D-ribofuranose. It functions in the pathway carbohydrate metabolism; D-ribose degradation; D-ribose 5-phosphate from beta-D-ribopyranose: step 1/2. Functionally, catalyzes the interconversion of beta-pyran and beta-furan forms of D-ribose. This is D-ribose pyranase from Pseudomonas entomophila (strain L48).